A 124-amino-acid polypeptide reads, in one-letter code: MDIPISTRDFRCLQLACVALGLVAGSIIIGVSVSKAAAAVGGIFLGAAGLGLLIFAYPFLKARFNLDHILPAIGNLRIHPNSGPDHGEGRSSNNSNKEGARSGLSTVTRTLEKLKPGGRGTEEG.

Helical transmembrane passes span 13-33 and 40-60; these read LQLA…GVSV and VGGI…YPFL. The disordered stretch occupies residues 80–124; sequence PNSGPDHGEGRSSNNSNKEGARSGLSTVTRTLEKLKPGGRGTEEG. Polar residues predominate over residues 90 to 109; sequence RSSNNSNKEGARSGLSTVTR. The span at 110–124 shows a compositional bias: basic and acidic residues; sequence TLEKLKPGGRGTEEG.

As to expression, preferentially expressed in the inner ear and testis. Localizes mainly in the kinocilium of sensory cells in the inner ear. Also present in the manchette of the spermatids, a transient structure enriched in interconnected microtubules (at protein level).

It is found in the membrane. In terms of biological role, may play a role in stabilizing dense microtubular networks or in vesicular trafficking. The protein is Kinocilin (Kncn) of Mus musculus (Mouse).